Here is a 143-residue protein sequence, read N- to C-terminus: Class II hydrophobin qid3 (143 aa).

The N-terminal stretch at 1–17 (MKFLTVAAVFFTAVLAA) is a signal peptide. Positions 20-37 (NYPPPPPPTYAPPPPTYT) are enriched in pro residues. The disordered stretch occupies residues 20 to 67 (NYPPPPPPTYAPPPPTYTLPPNGNGGGNGNGNGNGNGGGNGNGNGNTN). A run of 10 repeats spans residues 41–42 (NG), 43–44 (NG), 47–48 (NG), 49–50 (NG), 51–52 (NG), 53–54 (NG), 55–56 (NG), 59–60 (NG), 61–62 (NG), and 63–64 (NG). The 10 X 2 AA repeats of N-G stretch occupies residues 41–64 (NGNGGGNGNGNGNGNGGGNGNGNG). A compositionally biased stretch (gly residues) spans 42–63 (GNGGGNGNGNGNGNGGGNGNGN). Cystine bridges form between cysteine 74/cysteine 124, cysteine 85/cysteine 97, and cysteine 125/cysteine 136.

This sequence belongs to the cerato-ulmin hydrophobin family. In terms of assembly, homotetramer. Further self-assembles to form highly ordered films at water-air interfaces through intermolecular interactions.

Its subcellular location is the secreted. The protein localises to the cell wall. Its function is as follows. Aerial growth, conidiation, and dispersal of filamentous fungi in the environment rely upon a capability of their secreting small amphipathic proteins called hydrophobins (HPBs) with low sequence identity. Class I can self-assemble into an outermost layer of rodlet bundles on aerial cell surfaces, conferring cellular hydrophobicity that supports fungal growth, development and dispersal; whereas Class II form highly ordered films at water-air interfaces through intermolecular interactions but contribute nothing to the rodlet structure. Qid3 is a class II hydrophobin that might acts as a chitinase inhibitor at the cell surface that blocks the degradation of the chitin rings localized in the budding region of dividing cells. The sequence is that of Class II hydrophobin qid3 from Trichoderma harzianum (Hypocrea lixii).